The chain runs to 218 residues: Putative glutamine transport system permease protein GlnP (218 aa).

An ABC transmembrane type-1 domain is found at 19–208 (TLVTLKYSII…ILVMLISFIA (190 aa)). Helical transmembrane passes span 25 to 45 (YSIIAVILGLVIGMLLAICKV), 57 to 79 (FYTSIFRGTPLLVQLSIIYFAAP), 86 to 108 (FSVFMAGVISFALNSGAYVSEVI), and 187 to 207 (FFPMLIAACCYYILVMLISFI).

It belongs to the binding-protein-dependent transport system permease family. HisMQ subfamily.

It localises to the cell inner membrane. Part of the binding-protein-dependent transport system for glutamine; probably responsible for the translocation of the substrate across the membrane. The sequence is that of Putative glutamine transport system permease protein GlnP (glnP) from Rickettsia typhi (strain ATCC VR-144 / Wilmington).